We begin with the raw amino-acid sequence, 145 residues long: UPF0260 protein VC_1058 (145 aa).

This sequence belongs to the UPF0260 family.

This chain is UPF0260 protein VC_1058, found in Vibrio cholerae serotype O1 (strain ATCC 39315 / El Tor Inaba N16961).